The primary structure comprises 365 residues: 3-isopropylmalate dehydrogenase (365 aa).

78–91 contributes to the NAD(+) binding site; the sequence is GPKWDTLPAEERPE. Residues Arg-99, Arg-109, Arg-138, and Asp-227 each coordinate substrate. Mg(2+) contacts are provided by Asp-227, Asp-251, and Asp-255. 285-297 contacts NAD(+); that stretch reads GSAPDIAGKNIAN.

The protein belongs to the isocitrate and isopropylmalate dehydrogenases family. LeuB type 1 subfamily. In terms of assembly, homodimer. It depends on Mg(2+) as a cofactor. Requires Mn(2+) as cofactor.

It is found in the cytoplasm. The catalysed reaction is (2R,3S)-3-isopropylmalate + NAD(+) = 4-methyl-2-oxopentanoate + CO2 + NADH. It participates in amino-acid biosynthesis; L-leucine biosynthesis; L-leucine from 3-methyl-2-oxobutanoate: step 3/4. Functionally, catalyzes the oxidation of 3-carboxy-2-hydroxy-4-methylpentanoate (3-isopropylmalate) to 3-carboxy-4-methyl-2-oxopentanoate. The product decarboxylates to 4-methyl-2 oxopentanoate. In Syntrophotalea carbinolica (strain DSM 2380 / NBRC 103641 / GraBd1) (Pelobacter carbinolicus), this protein is 3-isopropylmalate dehydrogenase.